A 1040-amino-acid chain; its full sequence is Multidrug resistance protein MdtB (1040 aa).

12 consecutive transmembrane segments (helical) span residues 16–36 (FIMR…AGII), 342–362 (DTQF…YLFL), 369–389 (IIPG…MVFL), 396–416 (LTLM…IVVI), 440–460 (IGFT…PLLF), 472–492 (FAVT…TLTP), 537–557 (WLTL…WVFI), 863–883 (LGST…VLGV), 888–908 (FIHP…ALLA), 911–931 (LAGS…IGIV), 968–988 (ILMT…STGV), and 998–1018 (IGMV…TPVI).

This sequence belongs to the resistance-nodulation-cell division (RND) (TC 2.A.6) family. MdtB subfamily. In terms of assembly, part of a tripartite efflux system composed of MdtA, MdtB and MdtC. MdtB forms a heteromultimer with MdtC.

It localises to the cell inner membrane. The chain is Multidrug resistance protein MdtB from Klebsiella pneumoniae subsp. pneumoniae (strain ATCC 700721 / MGH 78578).